The sequence spans 2504 residues: Fatty acid synthase (2504 aa).

Methionine 1 carries the post-translational modification N-acetylmethionine. The 406-residue stretch at 1-406 (MEEVVIAGMS…GSNVHVILQP (406 aa)) folds into the Ketosynthase family 3 (KS3) domain. Lysine 59 is subject to N6-acetyllysine. A Phosphoserine modification is found at serine 63. Lysine 70 is modified (N6-acetyllysine). Cysteine 161 serves as the catalytic For beta-ketoacyl synthase activity. A Phosphoserine modification is found at serine 207. The active-site For beta-ketoacyl synthase activity is the histidine 293. Residue lysine 298 is modified to N6-acetyllysine. Catalysis depends on histidine 331, which acts as the For beta-ketoacyl synthase activity. Positions 429-817 (RTLEAVQDLL…INVNPNALFP (389 aa)) are acyl and malonyl transferases. Lysine 528 is subject to N6-acetyllysine. Residue serine 581 is the For malonyltransferase activity of the active site. An acyl-CoA-binding positions include 647–648 (DT) and phenylalanine 671. An N6-acetyllysine modification is found at lysine 673. Position 725 is a phosphoserine (serine 725). Residue arginine 773 participates in an acyl-CoA binding. Position 790 is an N6-acetyllysine (lysine 790). The segment at 844–967 (VPVAEDFPNG…VYLWEDPNSK (124 aa)) is N-terminal hotdog fold. One can recognise a PKS/mFAS DH domain in the interval 844–1104 (VPVAEDFPNG…ISRLQTTATS (261 aa)). Histidine 878 acts as the Proton acceptor; for dehydratase activity in catalysis. The tract at residues 982-1104 (SVSRLTQGEV…ISRLQTTATS (123 aa)) is C-terminal hotdog fold. At lysine 993 the chain carries N6-acetyllysine. The active-site Proton donor; for dehydratase activity is the aspartate 1032. N6-acetyllysine occurs at positions 1071 and 1276. Cysteine 1464 is modified (S-nitrosocysteine). Residues serine 1577 and serine 1587 each carry the phosphoserine modification. The segment at 1628-1856 (DVPSSWTLEE…VQVREEEPEA (229 aa)) is enoyl reductase. NADP(+) is bound at residue 1664–1681 (VLIHSGSGGVGQAAISIA). Position 1697 is an N6-(pyridoxal phosphate)lysine; alternate (lysine 1697). Lysine 1697 carries the N6-acetyllysine; alternate modification. Residues lysine 1764 and lysine 1840 each carry the N6-acetyllysine modification. The interval 1857 to 2111 (VLPGAQPTLI…FVLAEKKAVA (255 aa)) is beta-ketoacyl reductase. 1879 to 1894 (SYIITGGLGGFGLELA) lines the NADP(+) pocket. The residue at position 1988 (lysine 1988) is an N6-acetyllysine. Residue cysteine 2084 is modified to S-nitrosocysteine. The Carrier domain occupies 2112–2192 (HGDGDTQRDL…EMSSKTDSAT (81 aa)). Serine 2150 carries the post-translational modification O-(pantetheine 4'-phosphoryl)serine; alternate. Serine 2150 carries the post-translational modification Phosphoserine; alternate. Residues 2181 to 2205 (LQEMSSKTDSATDTTAPKSRSDTSL) form a disordered region. A compositionally biased stretch (low complexity) spans 2185–2198 (SSKTDSATDTTAPK). Phosphoserine is present on residues serine 2190 and serine 2229. Residues 2201-2504 (SDTSLKQNQL…AEPRVSVREG (304 aa)) form a thioesterase region. The active-site For thioesterase activity is the serine 2301. Lysine 2384 carries the post-translational modification N6-acetyllysine. Residue lysine 2442 forms a Glycyl lysine isopeptide (Lys-Gly) (interchain with G-Cter in SUMO2) linkage. The active-site For thioesterase activity is the histidine 2474.

In terms of assembly, homodimer which is arranged in a head to tail fashion. Interacts with CEACAM1; this interaction is insulin and phosphorylation-dependent; reduces fatty-acid synthase activity. In terms of processing, S-nitrosylation of Fatty acid synthase at cysteine residues Cys-1464 or Cys-2084 is important for the enzyme dimerization. In adipocytes, S-nitrosylation of Fatty acid synthase occurs under physiological conditions and gradually increases during adipogenesis.

It localises to the cytoplasm. It is found in the melanosome. The catalysed reaction is acetyl-CoA + n malonyl-CoA + 2n NADPH + 2n H(+) = a long-chain fatty acid + (n+1) CoA + n CO2 + 2n NADP(+).. It catalyses the reaction holo-[ACP] + acetyl-CoA = acetyl-[ACP] + CoA. It carries out the reaction holo-[ACP] + malonyl-CoA = malonyl-[ACP] + CoA. The enzyme catalyses a fatty acyl-[ACP] + malonyl-[ACP] + H(+) = a 3-oxoacyl-[ACP] + holo-[ACP] + CO2. The catalysed reaction is a (3R)-hydroxyacyl-[ACP] + NADP(+) = a 3-oxoacyl-[ACP] + NADPH + H(+). It catalyses the reaction a (3R)-hydroxyacyl-[ACP] = a (2E)-enoyl-[ACP] + H2O. It carries out the reaction a 2,3-saturated acyl-[ACP] + NADP(+) = a (2E)-enoyl-[ACP] + NADPH + H(+). The enzyme catalyses hexadecanoyl-[ACP] + H2O = hexadecanoate + holo-[ACP] + H(+). The catalysed reaction is acetyl-[ACP] + malonyl-[ACP] + H(+) = 3-oxobutanoyl-[ACP] + holo-[ACP] + CO2. It catalyses the reaction 3-oxobutanoyl-[ACP] + NADPH + H(+) = (3R)-hydroxybutanoyl-[ACP] + NADP(+). It carries out the reaction (3R)-hydroxybutanoyl-[ACP] = (2E)-butenoyl-[ACP] + H2O. The enzyme catalyses (2E)-butenoyl-[ACP] + NADPH + H(+) = butanoyl-[ACP] + NADP(+). The catalysed reaction is butanoyl-[ACP] + malonyl-[ACP] + H(+) = 3-oxohexanoyl-[ACP] + holo-[ACP] + CO2. It catalyses the reaction 3-oxohexanoyl-[ACP] + NADPH + H(+) = (3R)-hydroxyhexanoyl-[ACP] + NADP(+). It carries out the reaction (3R)-hydroxyhexanoyl-[ACP] = (2E)-hexenoyl-[ACP] + H2O. The enzyme catalyses (2E)-hexenoyl-[ACP] + NADPH + H(+) = hexanoyl-[ACP] + NADP(+). The catalysed reaction is hexanoyl-[ACP] + malonyl-[ACP] + H(+) = 3-oxooctanoyl-[ACP] + holo-[ACP] + CO2. It catalyses the reaction 3-oxooctanoyl-[ACP] + NADPH + H(+) = (3R)-hydroxyoctanoyl-[ACP] + NADP(+). It carries out the reaction (3R)-hydroxyoctanoyl-[ACP] = (2E)-octenoyl-[ACP] + H2O. The enzyme catalyses (2E)-octenoyl-[ACP] + NADPH + H(+) = octanoyl-[ACP] + NADP(+). The catalysed reaction is octanoyl-[ACP] + malonyl-[ACP] + H(+) = 3-oxodecanoyl-[ACP] + holo-[ACP] + CO2. It catalyses the reaction 3-oxodecanoyl-[ACP] + NADPH + H(+) = (3R)-hydroxydecanoyl-[ACP] + NADP(+). It carries out the reaction (3R)-hydroxydecanoyl-[ACP] = (2E)-decenoyl-[ACP] + H2O. The enzyme catalyses (2E)-decenoyl-[ACP] + NADPH + H(+) = decanoyl-[ACP] + NADP(+). The catalysed reaction is decanoyl-[ACP] + malonyl-[ACP] + H(+) = 3-oxododecanoyl-[ACP] + holo-[ACP] + CO2. It catalyses the reaction 3-oxododecanoyl-[ACP] + NADPH + H(+) = (3R)-hydroxydodecanoyl-[ACP] + NADP(+). It carries out the reaction (3R)-hydroxydodecanoyl-[ACP] = (2E)-dodecenoyl-[ACP] + H2O. The enzyme catalyses (2E)-dodecenoyl-[ACP] + NADPH + H(+) = dodecanoyl-[ACP] + NADP(+). The catalysed reaction is dodecanoyl-[ACP] + malonyl-[ACP] + H(+) = 3-oxotetradecanoyl-[ACP] + holo-[ACP] + CO2. It catalyses the reaction 3-oxotetradecanoyl-[ACP] + NADPH + H(+) = (3R)-hydroxytetradecanoyl-[ACP] + NADP(+). It carries out the reaction (3R)-hydroxytetradecanoyl-[ACP] = (2E)-tetradecenoyl-[ACP] + H2O. The enzyme catalyses (2E)-tetradecenoyl-[ACP] + NADPH + H(+) = tetradecanoyl-[ACP] + NADP(+). The catalysed reaction is tetradecanoyl-[ACP] + malonyl-[ACP] + H(+) = 3-oxohexadecanoyl-[ACP] + holo-[ACP] + CO2. It catalyses the reaction 3-oxohexadecanoyl-[ACP] + NADPH + H(+) = (3R)-hydroxyhexadecanoyl-[ACP] + NADP(+). It carries out the reaction (3R)-hydroxyhexadecanoyl-[ACP] = (2E)-hexadecenoyl-[ACP] + H2O. The enzyme catalyses (2E)-hexadecenoyl-[ACP] + NADPH + H(+) = hexadecanoyl-[ACP] + NADP(+). The catalysed reaction is hexadecanoyl-[ACP] + malonyl-[ACP] + H(+) = 3-oxooctadecanoyl-[ACP] + holo-[ACP] + CO2. It catalyses the reaction 3-oxooctadecanoyl-[ACP] + NADPH + H(+) = (3R)-hydroxyoctadecanoyl-[ACP] + NADP(+). It carries out the reaction (3R)-hydroxyoctadecanoyl-[ACP] = (2E)-octadecenoyl-[ACP] + H2O. The enzyme catalyses (2E)-octadecenoyl-[ACP] + NADPH + H(+) = octadecanoyl-[ACP] + NADP(+). The catalysed reaction is tetradecanoyl-[ACP] + H2O = tetradecanoate + holo-[ACP] + H(+). The protein operates within lipid metabolism; fatty acid biosynthesis. Its function is as follows. Fatty acid synthetase is a multifunctional enzyme that catalyzes the de novo biosynthesis of long-chain saturated fatty acids starting from acetyl-CoA and malonyl-CoA in the presence of NADPH. This multifunctional protein contains 7 catalytic activities and a site for the binding of the prosthetic group 4'-phosphopantetheine of the acyl carrier protein ([ACP]) domain. This chain is Fatty acid synthase (Fasn), found in Mus musculus (Mouse).